Here is a 251-residue protein sequence, read N- to C-terminus: Imidazole glycerol phosphate synthase subunit HisF (251 aa).

Residues Asp11 and Asp130 contribute to the active site.

This sequence belongs to the HisA/HisF family. Heterodimer of HisH and HisF.

It localises to the cytoplasm. It carries out the reaction 5-[(5-phospho-1-deoxy-D-ribulos-1-ylimino)methylamino]-1-(5-phospho-beta-D-ribosyl)imidazole-4-carboxamide + L-glutamine = D-erythro-1-(imidazol-4-yl)glycerol 3-phosphate + 5-amino-1-(5-phospho-beta-D-ribosyl)imidazole-4-carboxamide + L-glutamate + H(+). Its pathway is amino-acid biosynthesis; L-histidine biosynthesis; L-histidine from 5-phospho-alpha-D-ribose 1-diphosphate: step 5/9. IGPS catalyzes the conversion of PRFAR and glutamine to IGP, AICAR and glutamate. The HisF subunit catalyzes the cyclization activity that produces IGP and AICAR from PRFAR using the ammonia provided by the HisH subunit. In Chlorobaculum parvum (strain DSM 263 / NCIMB 8327) (Chlorobium vibrioforme subsp. thiosulfatophilum), this protein is Imidazole glycerol phosphate synthase subunit HisF.